The sequence spans 226 residues: ATP synthase F(0) complex subunit a (226 aa).

The next 6 helical transmembrane spans lie at 6–26 (FASFIAPTMMGLPIVTLIIMF), 68–88 (WSLMLMSLIMFIGSTNILGLL), 97–117 (QLSMNLGMAIPLWSATVFTGF), 136–156 (LLIPMLVIIETISLFIQPVAL), 164–184 (ITAGHLLIHLIGGATLALLNI), and 189–209 (AFITFTILILLTILEFAVALI).

Belongs to the ATPase A chain family. As to quaternary structure, component of the ATP synthase complex composed at least of ATP5F1A/subunit alpha, ATP5F1B/subunit beta, ATP5MC1/subunit c (homooctomer), MT-ATP6/subunit a, MT-ATP8/subunit 8, ATP5ME/subunit e, ATP5MF/subunit f, ATP5MG/subunit g, ATP5MK/subunit k, ATP5MJ/subunit j, ATP5F1C/subunit gamma, ATP5F1D/subunit delta, ATP5F1E/subunit epsilon, ATP5PF/subunit F6, ATP5PB/subunit b, ATP5PD/subunit d, ATP5PO/subunit OSCP. ATP synthase complex consists of a soluble F(1) head domain (subunits alpha(3) and beta(3)) - the catalytic core - and a membrane F(0) domain - the membrane proton channel (subunits c, a, 8, e, f, g, k and j). These two domains are linked by a central stalk (subunits gamma, delta, and epsilon) rotating inside the F1 region and a stationary peripheral stalk (subunits F6, b, d, and OSCP). Interacts with DNAJC30; interaction is direct.

The protein localises to the mitochondrion inner membrane. The catalysed reaction is H(+)(in) = H(+)(out). Its function is as follows. Subunit a, of the mitochondrial membrane ATP synthase complex (F(1)F(0) ATP synthase or Complex V) that produces ATP from ADP in the presence of a proton gradient across the membrane which is generated by electron transport complexes of the respiratory chain. ATP synthase complex consist of a soluble F(1) head domain - the catalytic core - and a membrane F(1) domain - the membrane proton channel. These two domains are linked by a central stalk rotating inside the F(1) region and a stationary peripheral stalk. During catalysis, ATP synthesis in the catalytic domain of F(1) is coupled via a rotary mechanism of the central stalk subunits to proton translocation. With the subunit c (ATP5MC1), forms the proton-conducting channel in the F(0) domain, that contains two crucial half-channels (inlet and outlet) that facilitate proton movement from the mitochondrial intermembrane space (IMS) into the matrix. Protons are taken up via the inlet half-channel and released through the outlet half-channel, following a Grotthuss mechanism. This chain is ATP synthase F(0) complex subunit a, found in Sus scrofa (Pig).